The primary structure comprises 324 residues: GDP-mannose transporter (324 aa).

The Cytoplasmic portion of the chain corresponds to 1–13; the sequence is MSELKSRIGNSGS. A helical transmembrane segment spans residues 14 to 34; the sequence is IANSGPVSILCYCASSILMTV. Residues 35 to 44 lie on the Lumenal side of the membrane; the sequence is TNKFVVNTDG. Residues 45–65 traverse the membrane as a helical segment; the sequence is FNMFFVMLFAQSLVCTMCLMV. Over 66–76 the chain is Cytoplasmic; that stretch reads LKMFGYAKYRP. Residues 77–97 traverse the membrane as a helical segment; that stretch reads LNLIDVKNWLPISFLLVFMIF. Topologically, residues 98-116 are lumenal; it reads TSAKALKYMPVPIYTIFKN. Asn116 carries an N-linked (GlcNAc...) asparagine glycan. The chain crosses the membrane as a helical span at residues 117–137; the sequence is LTIILIAYGEVLFFGGSVTPM. Glu138 is a topological domain (cytoplasmic). The helical transmembrane segment at 139 to 159 threads the bilayer; the sequence is LSSFILMVLSSVVASLGDQQA. Residues 160 to 170 lie on the Lumenal side of the membrane; sequence AKIAQPLANNS. N-linked (GlcNAc...) asparagine glycosylation occurs at Asn168. A helical membrane pass occupies residues 171 to 191; that stretch reads ILSPEYYWMFLNCICSASFVL. Residues 192-204 lie on the Cytoplasmic side of the membrane; that stretch reads IMRKRIKLTNFKD. Residues 205–225 form a helical membrane-spanning segment; it reads YDTMFYNNALALPILLGFSFL. Topologically, residues 226–243 are lumenal; it reads SEDWSSENLAQNFSGESL. An N-linked (GlcNAc...) asparagine glycan is attached at Asn237. Residues 244–264 form a helical membrane-spanning segment; sequence SAMIISGMTSVGISYCSGWCV. At 265–270 the chain is on the cytoplasmic side; it reads RATSST. A helical membrane pass occupies residues 271-291; it reads TYSMVGALNKLPIALAGLIFF. At 292–295 the chain is on the lumenal side; that stretch reads DAPR. A helical membrane pass occupies residues 296 to 316; the sequence is NFLSIMSIFIGFASGLSYAVA. Residues 317–324 are Cytoplasmic-facing; it reads KQKKVQKN.

Belongs to the TPT transporter family. SLC35D subfamily. As to quaternary structure, homooligomer.

It localises to the golgi apparatus membrane. The protein resides in the cytoplasmic vesicle membrane. Its subcellular location is the endoplasmic reticulum membrane. In terms of biological role, involved in the import of GDP-mannose from the cytoplasm into the Golgi lumen. The protein is GDP-mannose transporter (VRG4) of Candida glabrata (strain ATCC 2001 / BCRC 20586 / JCM 3761 / NBRC 0622 / NRRL Y-65 / CBS 138) (Yeast).